Reading from the N-terminus, the 139-residue chain is ATP synthase epsilon chain (139 aa).

It belongs to the ATPase epsilon chain family. In terms of assembly, F-type ATPases have 2 components, CF(1) - the catalytic core - and CF(0) - the membrane proton channel. CF(1) has five subunits: alpha(3), beta(3), gamma(1), delta(1), epsilon(1). CF(0) has three main subunits: a, b and c.

The protein localises to the cell membrane. Functionally, produces ATP from ADP in the presence of a proton gradient across the membrane. This is ATP synthase epsilon chain from Symbiobacterium thermophilum (strain DSM 24528 / JCM 14929 / IAM 14863 / T).